Here is a 156-residue protein sequence, read N- to C-terminus: Ribosomal RNA large subunit methyltransferase H (156 aa).

S-adenosyl-L-methionine contacts are provided by residues L72, G104, and 123-128 (FGKMVW).

The protein belongs to the RNA methyltransferase RlmH family. Homodimer.

It localises to the cytoplasm. It catalyses the reaction pseudouridine(1915) in 23S rRNA + S-adenosyl-L-methionine = N(3)-methylpseudouridine(1915) in 23S rRNA + S-adenosyl-L-homocysteine + H(+). Specifically methylates the pseudouridine at position 1915 (m3Psi1915) in 23S rRNA. The chain is Ribosomal RNA large subunit methyltransferase H from Ruegeria sp. (strain TM1040) (Silicibacter sp.).